The chain runs to 203 residues: Kunitz trypsin inhibitor 6 (203 aa).

An N-terminal signal peptide occupies residues 1-21 (MKTFQLMMISFLFVAITTTSG). An intrachain disulfide couples C70 to C115. Residues N94, N127, N136, N144, and N197 are each glycosylated (N-linked (GlcNAc...) asparagine).

The protein belongs to the protease inhibitor I3 (leguminous Kunitz-type inhibitor) family.

Exhibits Kunitz trypsin protease inhibitor activity. The sequence is that of Kunitz trypsin inhibitor 6 from Arabidopsis thaliana (Mouse-ear cress).